A 197-amino-acid polypeptide reads, in one-letter code: Recombination protein RecR (197 aa).

A C4-type zinc finger spans residues 56 to 71; that stretch reads CHVCGNYCESDTCNIC. Residues 79–174 form the Toprim domain; sequence RIICVVEESK…KITKLASGIP (96 aa).

The protein belongs to the RecR family.

In terms of biological role, may play a role in DNA repair. It seems to be involved in an RecBC-independent recombinational process of DNA repair. It may act with RecF and RecO. This Fusobacterium nucleatum subsp. nucleatum (strain ATCC 25586 / DSM 15643 / BCRC 10681 / CIP 101130 / JCM 8532 / KCTC 2640 / LMG 13131 / VPI 4355) protein is Recombination protein RecR.